The following is a 230-amino-acid chain: MFFKRWFWRIFLFFIAVIFVYQFWIFSQIVYWNYFNPSSSAFMQTRLETLREKNTKAALRTRWIPYEQISPHLKRAIIAAEDAKFLEHEGFDFDAIQKAYEKNLKKGRLIMGGSTISQQLAKNLFLSGDKTPWRKLQEAFITLMLEKVMSKRRILEIYLNVIEWGNVVFGAEAAARHYYGISASSVSREQAARLAAMVPSPRFYDENRNTPWLSKKTRMILGRMASASIP.

The helical transmembrane segment at 10–30 (IFLFFIAVIFVYQFWIFSQIV) threads the bilayer.

Belongs to the glycosyltransferase 51 family.

The protein localises to the cell inner membrane. The enzyme catalyses [GlcNAc-(1-&gt;4)-Mur2Ac(oyl-L-Ala-gamma-D-Glu-L-Lys-D-Ala-D-Ala)](n)-di-trans,octa-cis-undecaprenyl diphosphate + beta-D-GlcNAc-(1-&gt;4)-Mur2Ac(oyl-L-Ala-gamma-D-Glu-L-Lys-D-Ala-D-Ala)-di-trans,octa-cis-undecaprenyl diphosphate = [GlcNAc-(1-&gt;4)-Mur2Ac(oyl-L-Ala-gamma-D-Glu-L-Lys-D-Ala-D-Ala)](n+1)-di-trans,octa-cis-undecaprenyl diphosphate + di-trans,octa-cis-undecaprenyl diphosphate + H(+). Its pathway is cell wall biogenesis; peptidoglycan biosynthesis. Peptidoglycan polymerase that catalyzes glycan chain elongation from lipid-linked precursors. This chain is Biosynthetic peptidoglycan transglycosylase, found in Nitrosospira multiformis (strain ATCC 25196 / NCIMB 11849 / C 71).